The primary structure comprises 340 residues: DNA-directed RNA polymerase subunit alpha (340 aa).

An alpha N-terminal domain (alpha-NTD) region spans residues 1 to 236; it reads MLSLSKNWNT…EQLQLFISFE (236 aa). An alpha C-terminal domain (alpha-CTD) region spans residues 251–340; the sequence is FSPYLLKRVD…LSKRYEDSYN (90 aa).

Belongs to the RNA polymerase alpha chain family. Homodimer. The RNAP catalytic core consists of 2 alpha, 1 beta, 1 beta' and 1 omega subunit. When a sigma factor is associated with the core the holoenzyme is formed, which can initiate transcription.

It catalyses the reaction RNA(n) + a ribonucleoside 5'-triphosphate = RNA(n+1) + diphosphate. In terms of biological role, DNA-dependent RNA polymerase catalyzes the transcription of DNA into RNA using the four ribonucleoside triphosphates as substrates. This chain is DNA-directed RNA polymerase subunit alpha, found in Rickettsia africae (strain ESF-5).